A 446-amino-acid chain; its full sequence is MDFISNKTPQIEAMLTEIGIQNVEELFKSIPSSLILQAPSVDDGLSEYEGIQLIESLAVRNTFPNLVSYLGAGAYEHHIPALVGAVCSKSEFLTAYTPYQAEASQGMLQIIFEFQSAICALTGMDVANASVYDGASACAEAILMSLRHHKTRRQILLSDSLHPHYKKVIEQYLKSQDCELITVPFLQEGTLDASFLKMYLNDQTAAILLQSPNFFGCIEDVQPITEMAKSQGALTILCANPISYGLLSSAKELGVDIAVGDCQPFGLSLSFGGPYAGYMACKQELMRQLPGRIVGETLDVQGSRGFVLTLQAREQHIRREKATSNICTNQALAALASLVAMLWYGKEGVKELALTNYQRANYLKFHLGKISTINVWNQGASFNEFVVDFKQDSNQVLEFFRLNGIEPGIELKRYYPSLKTCLLIAVTETKNQIQLDQFIKVCKELF.

Belongs to the GcvP family. N-terminal subunit subfamily. As to quaternary structure, the glycine cleavage system is composed of four proteins: P, T, L and H. In this organism, the P 'protein' is a heterodimer of two subunits.

It carries out the reaction N(6)-[(R)-lipoyl]-L-lysyl-[glycine-cleavage complex H protein] + glycine + H(+) = N(6)-[(R)-S(8)-aminomethyldihydrolipoyl]-L-lysyl-[glycine-cleavage complex H protein] + CO2. The glycine cleavage system catalyzes the degradation of glycine. The P protein binds the alpha-amino group of glycine through its pyridoxal phosphate cofactor; CO(2) is released and the remaining methylamine moiety is then transferred to the lipoamide cofactor of the H protein. The sequence is that of Probable glycine dehydrogenase (decarboxylating) subunit 1 from Protochlamydia amoebophila (strain UWE25).